Here is a 369-residue protein sequence, read N- to C-terminus: Probable N-acetyltransferase 16 (369 aa).

The tract at residues methionine 1–glutamate 49 is disordered. Over residues proline 15–glutamate 26 the composition is skewed to basic and acidic residues. One can recognise an N-acetyltransferase domain in the interval leucine 53–alanine 188.

In terms of biological role, probable N-acetyltransferase. Shows only trace activity toward L-His and no N-acetyltransferase activity toward other amino acids. The physiological substrate of this enzyme is unknown. The protein is Probable N-acetyltransferase 16 (NAT16) of Homo sapiens (Human).